The sequence spans 115 residues: NADH-ubiquinone oxidoreductase chain 3 (115 aa).

A run of 3 helical transmembrane segments spans residues 4–24 (LLAM…AFWL), 55–75 (FFLV…LLPI), and 87–107 (MMLT…YEWI).

The protein belongs to the complex I subunit 3 family. As to quaternary structure, core subunit of respiratory chain NADH dehydrogenase (Complex I) which is composed of 45 different subunits. Interacts with TMEM186. Interacts with TMEM242.

It is found in the mitochondrion inner membrane. The enzyme catalyses a ubiquinone + NADH + 5 H(+)(in) = a ubiquinol + NAD(+) + 4 H(+)(out). Its function is as follows. Core subunit of the mitochondrial membrane respiratory chain NADH dehydrogenase (Complex I) which catalyzes electron transfer from NADH through the respiratory chain, using ubiquinone as an electron acceptor. Essential for the catalytic activity of complex I. The chain is NADH-ubiquinone oxidoreductase chain 3 from Neotoma floridana (Eastern woodrat).